We begin with the raw amino-acid sequence, 460 residues long: MDYNKILQGKYPAKQHAKRVSDYIRDKIPNATGVLYLEGRATKMIEDNDSEEHFRQRRYFYYLTGCPLADSYVIHDMDSSKTTLFIPPVDPESVIWSGLPVSAEEALSNWDVDEVKYTNEINATLAHVGASKANATLYAIPNQVSEKVTFLEFDHKNFSILKEAIEVTRVVKDEYEIAMIGKANQISSRAHELVMKKVKHVKNERELEAVFLAECISNGARDQAYHSIVAAGRAAATLHYVANNAPLDGKLNLLLDAGGEWNCYASDITRTFPINGKFTTESRAIYDIVLKMQLECIATLKEGVVWDDVHTLAHKIAIDGLLELGILKGDKEAILESRTSVAFFPHGLGHYLGMDTHDTGGNANYADKDTMFRYLRVRGTLPAGSVITVEPGLYFCNFIIEPFLNDPKHSQYINRPVLDRYWDVGGVRIEDNIVITKRGTQNLTTAVKDPDEMERLIASS.

The Mn(2+) site is built by Asp-256, Asp-267, Glu-390, and Glu-430.

Belongs to the peptidase M24B family. Requires Mn(2+) as cofactor.

It carries out the reaction Release of any N-terminal amino acid, including proline, that is linked to proline, even from a dipeptide or tripeptide.. In terms of biological role, catalyzes the removal of a penultimate prolyl residue from the N-termini of peptides. In Podospora anserina (strain S / ATCC MYA-4624 / DSM 980 / FGSC 10383) (Pleurage anserina), this protein is Probable Xaa-Pro aminopeptidase PEPP (PEPP).